The sequence spans 206 residues: N-(5'-phosphoribosyl)anthranilate isomerase (206 aa).

This sequence belongs to the TrpF family.

The enzyme catalyses N-(5-phospho-beta-D-ribosyl)anthranilate = 1-(2-carboxyphenylamino)-1-deoxy-D-ribulose 5-phosphate. Its pathway is amino-acid biosynthesis; L-tryptophan biosynthesis; L-tryptophan from chorismate: step 3/5. This Chlamydia caviae (strain ATCC VR-813 / DSM 19441 / 03DC25 / GPIC) (Chlamydophila caviae) protein is N-(5'-phosphoribosyl)anthranilate isomerase.